A 440-amino-acid polypeptide reads, in one-letter code: Chromosome partition protein MukF (440 aa).

Residues 208–236 (LSETSGTLRELQDTLEAAGDKLQANLLRI) form a leucine-zipper region.

The protein belongs to the MukF family. In terms of assembly, interacts, and probably forms a ternary complex, with MukE and MukB via its C-terminal region. The complex formation is stimulated by calcium or magnesium. It is required for an interaction between MukE and MukB.

The protein localises to the cytoplasm. It localises to the nucleoid. In terms of biological role, involved in chromosome condensation, segregation and cell cycle progression. May participate in facilitating chromosome segregation by condensation DNA from both sides of a centrally located replisome during cell division. Not required for mini-F plasmid partitioning. Probably acts via its interaction with MukB and MukE. Overexpression results in anucleate cells. It has a calcium binding activity. In Citrobacter koseri (strain ATCC BAA-895 / CDC 4225-83 / SGSC4696), this protein is Chromosome partition protein MukF.